Here is a 216-residue protein sequence, read N- to C-terminus: MNTLRFPAGLYGVTPEWDDTSRLLAAVRDAAAGGMRALQLRRKHLSREQRLLQARALAPLCRELGVTFIVNDDWRTALEAGADGAHIGRDDATLAEVRAAAPGLLLGVSCYADLNRARELLAQGADYIAFGAVFPSPTKPQAAHAPLALLGEAAAQVRACGEPRPAVVAIGGITPANAGLVAAAGADSIAVITGLFEAPDIRAAAQACAAPFPLTD.

4-amino-2-methyl-5-(diphosphooxymethyl)pyrimidine contacts are provided by residues 39-43 and Asn-71; that span reads QLRRK. Positions 72 and 91 each coordinate Mg(2+). Residue Ser-109 coordinates 4-amino-2-methyl-5-(diphosphooxymethyl)pyrimidine. A 2-[(2R,5Z)-2-carboxy-4-methylthiazol-5(2H)-ylidene]ethyl phosphate-binding site is contributed by 136 to 138; that stretch reads SPT. Lys-139 is a 4-amino-2-methyl-5-(diphosphooxymethyl)pyrimidine binding site. Residues Gly-172 and 192–193 contribute to the 2-[(2R,5Z)-2-carboxy-4-methylthiazol-5(2H)-ylidene]ethyl phosphate site; that span reads IT.

It belongs to the thiamine-phosphate synthase family. The cofactor is Mg(2+).

It catalyses the reaction 2-[(2R,5Z)-2-carboxy-4-methylthiazol-5(2H)-ylidene]ethyl phosphate + 4-amino-2-methyl-5-(diphosphooxymethyl)pyrimidine + 2 H(+) = thiamine phosphate + CO2 + diphosphate. It carries out the reaction 2-(2-carboxy-4-methylthiazol-5-yl)ethyl phosphate + 4-amino-2-methyl-5-(diphosphooxymethyl)pyrimidine + 2 H(+) = thiamine phosphate + CO2 + diphosphate. The enzyme catalyses 4-methyl-5-(2-phosphooxyethyl)-thiazole + 4-amino-2-methyl-5-(diphosphooxymethyl)pyrimidine + H(+) = thiamine phosphate + diphosphate. The protein operates within cofactor biosynthesis; thiamine diphosphate biosynthesis; thiamine phosphate from 4-amino-2-methyl-5-diphosphomethylpyrimidine and 4-methyl-5-(2-phosphoethyl)-thiazole: step 1/1. Condenses 4-methyl-5-(beta-hydroxyethyl)thiazole monophosphate (THZ-P) and 2-methyl-4-amino-5-hydroxymethyl pyrimidine pyrophosphate (HMP-PP) to form thiamine monophosphate (TMP). The sequence is that of Thiamine-phosphate synthase from Bordetella avium (strain 197N).